A 566-amino-acid chain; its full sequence is MDFKKLAAEEIKKNIDLELNFIEGLIEVPPKPEMGDYAFPCFQLAKVLKKAPNIISKELKDKLHSKYFEKIENLGPYVNFFVDKKIFTEYTLKEILLKGDSYGSSDMGEGKNVVVEYSSPNIAKPFHVGHLFSTSIGNALYKMINFQGYNCTRINHLGDWGTQFGKLIAAYNRWCNAEELNRDPIKELLRIYVKFHEEAEKDPSLNEEGRMYFKKLEDGSEEEIKLWKKFKDLSLREFKKVYDLLKVDFDSYAGESFYTDKMDAVVEEIDKKGLLVESNGAKVVLLDEYNIPPCIVKKSDGTTIYATRDLAAAIYRKKTYDFYKSIYVVGLDQSLHFKQVFTTLKLMGKDWADSCKHVGFGLVRFANKKLSTRKGDVIFLEELLNKSVERTLEIINEKNPKLENKEEAAKKIGIGAVIFTYLKNNREKDIVFDWNEMLSFEGETGPYVQYSYARGKSILRKSEEASYDENQIDYSKLGSKEEFELVKILENFNKSIINAINRLEPFIVTRYVIDVAKAFNKFYNAHSIMNAADENIKKARLYLVKCTCQVLKNGLNLMGIEVVEKM.

The 'HIGH' region motif lies at 120–130 (PNIAKPFHVGH).

It belongs to the class-I aminoacyl-tRNA synthetase family. Monomer.

The protein localises to the cytoplasm. The catalysed reaction is tRNA(Arg) + L-arginine + ATP = L-arginyl-tRNA(Arg) + AMP + diphosphate. The sequence is that of Arginine--tRNA ligase from Clostridium kluyveri (strain NBRC 12016).